The following is a 41-amino-acid chain: Histone H3.2 (41 aa).

Residues 1–41 (MARTKQTARKSTGAKAPRKQLASKAARKSAPATGGIKKPHR) are disordered.

Belongs to the histone H3 family. As to quaternary structure, the nucleosome is a histone octamer containing two molecules each of H2A, H2B, H3 and H4 assembled in one H3-H4 heterotetramer and two H2A-H2B heterodimers. The octamer wraps approximately 147 bp of DNA.

Its subcellular location is the nucleus. The protein resides in the chromosome. In terms of biological role, core component of nucleosome. Nucleosomes wrap and compact DNA into chromatin, limiting DNA accessibility to the cellular machineries which require DNA as a template. Histones thereby play a central role in transcription regulation, DNA repair, DNA replication and chromosomal stability. DNA accessibility is regulated via a complex set of post-translational modifications of histones, also called histone code, and nucleosome remodeling. The sequence is that of Histone H3.2 from Tetrahymena australis.